A 93-amino-acid chain; its full sequence is DNA-directed RNA polymerase subunit omega (93 aa).

It belongs to the RNA polymerase subunit omega family. As to quaternary structure, the RNAP catalytic core consists of 2 alpha, 1 beta, 1 beta' and 1 omega subunit. When a sigma factor is associated with the core the holoenzyme is formed, which can initiate transcription.

It carries out the reaction RNA(n) + a ribonucleoside 5'-triphosphate = RNA(n+1) + diphosphate. In terms of biological role, promotes RNA polymerase assembly. Latches the N- and C-terminal regions of the beta' subunit thereby facilitating its interaction with the beta and alpha subunits. This Shewanella loihica (strain ATCC BAA-1088 / PV-4) protein is DNA-directed RNA polymerase subunit omega.